The chain runs to 370 residues: Aspartate-semialdehyde dehydrogenase (370 aa).

NADP(+) contacts are provided by residues 10 to 13 (RGMV), 37 to 38 (TS), and Gln73. Arg102 serves as a coordination point for phosphate. The active-site Acyl-thioester intermediate is the Cys135. Gln162 is a binding site for substrate. NADP(+)-binding positions include 165 to 166 (SG) and Pro193. Glu241 contributes to the substrate binding site. Lys244 contacts phosphate. Position 268 (Arg268) interacts with substrate. His275 serves as the catalytic Proton acceptor. Gln351 lines the NADP(+) pocket.

The protein belongs to the aspartate-semialdehyde dehydrogenase family. Homodimer.

It catalyses the reaction L-aspartate 4-semialdehyde + phosphate + NADP(+) = 4-phospho-L-aspartate + NADPH + H(+). It participates in amino-acid biosynthesis; L-lysine biosynthesis via DAP pathway; (S)-tetrahydrodipicolinate from L-aspartate: step 2/4. It functions in the pathway amino-acid biosynthesis; L-methionine biosynthesis via de novo pathway; L-homoserine from L-aspartate: step 2/3. The protein operates within amino-acid biosynthesis; L-threonine biosynthesis; L-threonine from L-aspartate: step 2/5. In terms of biological role, catalyzes the NADPH-dependent formation of L-aspartate-semialdehyde (L-ASA) by the reductive dephosphorylation of L-aspartyl-4-phosphate. In Pseudomonas aeruginosa (strain ATCC 15692 / DSM 22644 / CIP 104116 / JCM 14847 / LMG 12228 / 1C / PRS 101 / PAO1), this protein is Aspartate-semialdehyde dehydrogenase (asd).